The primary structure comprises 351 residues: Nicotinate-nucleotide--dimethylbenzimidazole phosphoribosyltransferase (351 aa).

Glu313 serves as the catalytic Proton acceptor.

This sequence belongs to the CobT family.

The catalysed reaction is 5,6-dimethylbenzimidazole + nicotinate beta-D-ribonucleotide = alpha-ribazole 5'-phosphate + nicotinate + H(+). Its pathway is nucleoside biosynthesis; alpha-ribazole biosynthesis; alpha-ribazole from 5,6-dimethylbenzimidazole: step 1/2. Catalyzes the synthesis of alpha-ribazole-5'-phosphate from nicotinate mononucleotide (NAMN) and 5,6-dimethylbenzimidazole (DMB). This is Nicotinate-nucleotide--dimethylbenzimidazole phosphoribosyltransferase from Mycobacterium leprae (strain Br4923).